The primary structure comprises 154 residues: Myoglobin (154 aa).

The region spanning 2-148 (GLSDGEWQLV…FRNDMAAKYK (147 aa)) is the Globin domain. At S4 the chain carries Phosphoserine. H65 contacts nitrite. H65 lines the O2 pocket. Residue T68 is modified to Phosphothreonine. Heme b is bound at residue H94.

It belongs to the globin family. Monomeric.

Its subcellular location is the cytoplasm. It is found in the sarcoplasm. It carries out the reaction Fe(III)-heme b-[protein] + nitric oxide + H2O = Fe(II)-heme b-[protein] + nitrite + 2 H(+). The catalysed reaction is H2O2 + AH2 = A + 2 H2O. Its function is as follows. Monomeric heme protein which primary function is to store oxygen and facilitate its diffusion within muscle tissues. Reversibly binds oxygen through a pentacoordinated heme iron and enables its timely and efficient release as needed during periods of heightened demand. Depending on the oxidative conditions of tissues and cells, and in addition to its ability to bind oxygen, it also has a nitrite reductase activity whereby it regulates the production of bioactive nitric oxide. Under stress conditions, like hypoxia and anoxia, it also protects cells against reactive oxygen species thanks to its pseudoperoxidase activity. This Sus scrofa (Pig) protein is Myoglobin (MB).